A 98-amino-acid chain; its full sequence is VQ motif-containing protein 1 (98 aa).

The VQ motif lies at 27 to 36 (FKTIVQELTG).

Interacts with WRKY33.

It localises to the nucleus. May modulate WRKY transcription factor activities. In Arabidopsis thaliana (Mouse-ear cress), this protein is VQ motif-containing protein 1.